Here is a 70-residue protein sequence, read N- to C-terminus: MGMRMMFIVFLLVVLATTVVSFTLDHVLGLASEGRNAKAIDNALDQRDPKRQTPGCCWHPACGKNRCGRR.

Positions 1-21 (MGMRMMFIVFLLVVLATTVVS) are cleaved as a signal peptide. Residues 22-51 (FTLDHVLGLASEGRNAKAIDNALDQRDPKR) constitute a propeptide that is removed on maturation. The residue at position 52 (Gln52) is a Pyrrolidone carboxylic acid. At Pro54 the chain carries Hydroxyproline. Cystine bridges form between Cys56–Cys62 and Cys57–Cys67. Position 67 is a cysteine amide (Cys67).

Expressed by the venom duct.

It is found in the secreted. Alpha-conotoxins bind to the nicotinic acetylcholine receptors (nAChR) and inhibit them. This peptide potently blocks muscular nicotinic acetylcholine receptor (CHRNA1-CHRNB1-CHRNG-CHRND), and has no effect on neuronal receptors. It is able to totally displace [125I]-Bgtx from the Torpedo receptor with an inhibition constant (Ki) of 2.2 and 0.7 nM. The polypeptide is Alpha-conotoxin EIIB (Conus ermineus (Agate cone)).